The primary structure comprises 176 residues: Prepronociceptin (176 aa).

An N-terminal signal peptide occupies residues 1 to 19 (MKILFCDLLLLSLFSSVSS). 2 consecutive propeptides follow at residues 20-95 (SCQK…MQHL) and 169-176 (TLHQNGNA).

Belongs to the opioid neuropeptide precursor family. Post-translationally, specific enzymatic cleavages at paired basic residues probably yield other active peptides besides nociceptin. The N-terminal domain contains 6 conserved cysteines thought to be involved in disulfide bonding and/or processing.

The protein localises to the secreted. In terms of biological role, ligand of the opioid receptor-like receptor OPRL1. It may act as a transmitter in the brain by modulating nociceptive and locomotor behavior. May be involved in neuronal differentiation and development. Its function is as follows. Blocks nociceptin action in pain transmission by inhibiting nociceptin-induced hyperalgesia and allodynia. Functionally, has potent analgesic activity. The sequence is that of Prepronociceptin (PNOC) from Bos taurus (Bovine).